Here is a 208-residue protein sequence, read N- to C-terminus: Uracil phosphoribosyltransferase (208 aa).

5-phospho-alpha-D-ribose 1-diphosphate-binding positions include arginine 78, arginine 103, and 130–138 (DPMLATGGS). Uracil is bound by residues isoleucine 193 and 198-200 (GDA). A 5-phospho-alpha-D-ribose 1-diphosphate-binding site is contributed by aspartate 199.

The protein belongs to the UPRTase family. Requires Mg(2+) as cofactor.

The catalysed reaction is UMP + diphosphate = 5-phospho-alpha-D-ribose 1-diphosphate + uracil. It functions in the pathway pyrimidine metabolism; UMP biosynthesis via salvage pathway; UMP from uracil: step 1/1. Its activity is regulated as follows. Allosterically activated by GTP. Its function is as follows. Catalyzes the conversion of uracil and 5-phospho-alpha-D-ribose 1-diphosphate (PRPP) to UMP and diphosphate. The polypeptide is Uracil phosphoribosyltransferase (Escherichia coli O139:H28 (strain E24377A / ETEC)).